Reading from the N-terminus, the 486-residue chain is Ribosomal RNA small subunit methyltransferase F (486 aa).

Residues 124 to 130, E148, D175, and D193 contribute to the S-adenosyl-L-methionine site; that span reads ASAPGSK. C246 functions as the Nucleophile in the catalytic mechanism.

The protein belongs to the class I-like SAM-binding methyltransferase superfamily. RsmB/NOP family.

Its subcellular location is the cytoplasm. It carries out the reaction cytidine(1407) in 16S rRNA + S-adenosyl-L-methionine = 5-methylcytidine(1407) in 16S rRNA + S-adenosyl-L-homocysteine + H(+). In terms of biological role, specifically methylates the cytosine at position 1407 (m5C1407) of 16S rRNA. This is Ribosomal RNA small subunit methyltransferase F from Shewanella baltica (strain OS155 / ATCC BAA-1091).